The following is a 227-amino-acid chain: Chloronitrobenzene nitroreductase (227 aa).

Residue 14–18 (RRTKR) coordinates FMN. Residue Ser44 participates in NADP(+) binding. FMN contacts are provided by residues 172–173 (GL) and Arg215.

Belongs to the nitroreductase family. FMN is required as a cofactor.

The enzyme catalyses N-phenylhydroxylamine + 2 NADP(+) + H2O = nitrobenzene + 2 NADPH + 2 H(+). It participates in xenobiotic degradation; nitrobenzene degradation. Its pathway is xenobiotic degradation; 4-chloronitrobenzene degradation. Involved in the biodegradation of chlorinated nitroaromatic compounds. Catalyzes the reduction of 4-chloronitrobenzene to yield 1-hydroxylamino-4-chlorobenzene. Probably also able to catalyze the two-electron reduction of nitrobenzene (NB) to produce a nitrosobenzene (NOB) intermediate, which is immediately reduced to hydroxylaminobenzene (HAB) by a second two-electron transfer. This chain is Chloronitrobenzene nitroreductase, found in Comamonas testosteroni (Pseudomonas testosteroni).